Here is a 232-residue protein sequence, read N- to C-terminus: Ubiquinone biosynthesis O-methyltransferase (232 aa).

The S-adenosyl-L-methionine site is built by R36, G55, D76, and M120.

It belongs to the methyltransferase superfamily. UbiG/COQ3 family.

The enzyme catalyses a 3-demethylubiquinol + S-adenosyl-L-methionine = a ubiquinol + S-adenosyl-L-homocysteine + H(+). The catalysed reaction is a 3-(all-trans-polyprenyl)benzene-1,2-diol + S-adenosyl-L-methionine = a 2-methoxy-6-(all-trans-polyprenyl)phenol + S-adenosyl-L-homocysteine + H(+). It participates in cofactor biosynthesis; ubiquinone biosynthesis. O-methyltransferase that catalyzes the 2 O-methylation steps in the ubiquinone biosynthetic pathway. The polypeptide is Ubiquinone biosynthesis O-methyltransferase (Paraburkholderia phymatum (strain DSM 17167 / CIP 108236 / LMG 21445 / STM815) (Burkholderia phymatum)).